The chain runs to 224 residues: MLIEIPNVFSKQEVSHLREQLDARRWIDGNQTSGAMATTRKRNQQLDKDDPVAVALGQQIMDRLLAHPQFVSAALPLQFYPPLFNRYQGGETFGYHIDNAIRSTPDGMIRTDLSATLFLSEPESYQGGELVIQDTYGQQSIKLSAGSLVLYPSSSLHQVTPVLSGERTAAFMWLQSMVRDEGQRRLLFQLDQSIQTLTAQQAAEQELFNLTGIYHNLLRRWSEL.

The 99-residue stretch at 78–176 folds into the Fe2OG dioxygenase domain; the sequence is QFYPPLFNRY…RTAAFMWLQS (99 aa). 3 residues coordinate Fe cation: histidine 96, aspartate 98, and histidine 157. Arginine 167 provides a ligand contact to 2-oxoglutarate.

The cofactor is Fe(2+). L-ascorbate is required as a cofactor.

This is PKHD-type hydroxylase Sbal195_0750 from Shewanella baltica (strain OS195).